Consider the following 242-residue polypeptide: Probable 2-phosphosulfolactate phosphatase (242 aa).

The protein belongs to the ComB family. It depends on Mg(2+) as a cofactor.

It catalyses the reaction (2R)-O-phospho-3-sulfolactate + H2O = (2R)-3-sulfolactate + phosphate. The polypeptide is Probable 2-phosphosulfolactate phosphatase (Synechococcus sp. (strain JA-3-3Ab) (Cyanobacteria bacterium Yellowstone A-Prime)).